Consider the following 309-residue polypeptide: Homoserine O-succinyltransferase (309 aa).

Cys-142 serves as the catalytic Acyl-thioester intermediate. The substrate site is built by Lys-163 and Ser-192. The active-site Proton acceptor is His-235. Glu-237 is a catalytic residue. Residue Arg-249 coordinates substrate.

It belongs to the MetA family. As to quaternary structure, homodimer.

Its subcellular location is the cytoplasm. The catalysed reaction is L-homoserine + succinyl-CoA = O-succinyl-L-homoserine + CoA. The protein operates within amino-acid biosynthesis; L-methionine biosynthesis via de novo pathway; O-succinyl-L-homoserine from L-homoserine: step 1/1. Functionally, transfers a succinyl group from succinyl-CoA to L-homoserine, forming succinyl-L-homoserine. The protein is Homoserine O-succinyltransferase of Escherichia coli (strain K12 / MC4100 / BW2952).